The primary structure comprises 179 residues: Cell division protein SepF (179 aa).

The tract at residues 22–55 (LPYEKRDEPVFTSVNSSQEPALPMNQPSQSAGTK) is disordered. Over residues 33–55 (TSVNSSQEPALPMNQPSQSAGTK) the composition is skewed to polar residues.

It belongs to the SepF family. Homodimer. Interacts with FtsZ.

The protein resides in the cytoplasm. In terms of biological role, cell division protein that is part of the divisome complex and is recruited early to the Z-ring. Probably stimulates Z-ring formation, perhaps through the cross-linking of FtsZ protofilaments. Its function overlaps with FtsA. This chain is Cell division protein SepF, found in Streptococcus pneumoniae (strain Taiwan19F-14).